A 755-amino-acid polypeptide reads, in one-letter code: LIM domain and actin-binding protein 1 (755 aa).

Methionine 1 carries the N-acetylmethionine modification. Serine 15 is modified (phosphoserine). Over residues 43 to 56 (KAAEEANMERKKNN) the composition is skewed to basic and acidic residues. The disordered stretch occupies residues 43-151 (KAAEEANMER…YPRSEDSHDF (109 aa)). Over residues 88–97 (DSLPNSSSDG) the composition is skewed to polar residues. At serine 132 the chain carries Phosphoserine. The Required for interaction with NPC1L1 signature appears at 164-166 (CLG). 2 stretches are compositionally biased toward basic and acidic residues: residues 168–177 (SRHEAEKPEM) and 199–208 (MMFEKGEHSQ). The tract at residues 168–226 (SRHEAEKPEMSENTETSGKIEKYNVPLNRLKMMFEKGEHSQNKSPWTQGRNAGGRRLSE) is disordered. Serine 225, serine 230, and serine 242 each carry phosphoserine. Positions 241 to 379 (LSSSAFNSEK…ESSPSKTAKK (139 aa)) are disordered. Residues 249 to 258 (EKNESKRNLE) are compositionally biased toward basic and acidic residues. Residue serine 263 is modified to Phosphoserine. A compositionally biased stretch (basic and acidic residues) spans 292–305 (KPSESKTHKWEQKE). Over residues 342–354 (CNSQGRSEAQQPI) the composition is skewed to polar residues. Phosphoserine occurs at positions 348, 360, 367, and 372. Over residues 363 to 375 (ARTSSLPESSPSK) the composition is skewed to polar residues. The 61-residue stretch at 386–446 (ESCVECQKTV…KPHFNQLFKS (61 aa)) folds into the LIM zinc-binding domain. Lysine 437 carries the post-translational modification N6-succinyllysine. 2 disordered regions span residues 468–493 (ENEETLGRPAQPPSAGETPHSPGVED) and 505–714 (SMEA…DTTT). Serine 488 carries the post-translational modification Phosphoserine. Positions 491–511 (VEDAPIAKVGVLAASMEAKAS) are required for interaction with MYO5B. Composition is skewed to basic and acidic residues over residues 512–526 (SQREREENKPAETKK) and 555–566 (WPPEDEVCKTEA). Residues 599–611 (SSVKSPKPLSPSL) are compositionally biased toward low complexity. A phosphoserine mark is found at serine 600, serine 603, serine 608, and serine 616. 2 stretches are compositionally biased toward basic and acidic residues: residues 638 to 653 (RPSREKESVGKSRWQS) and 662 to 673 (EAPRGRDGRSFE). Phosphoserine occurs at positions 697, 722, and 737.

In terms of assembly, interacts with NPC1L1; bridges NPC1L1 with MYO5B. Interacts with MYO5B; bridges MYO5B with NPC1L1. Interacts with PXN; this complex stabilizes actin dynamics. Interacts with F-actin and G-actin. Interacts with LUZP1 (via C-terminus); both proteins restrict ciliation and may work together to regulate this process. Binds RAB40B (GTP-bound); interaction influences LIMA1 subcellular localization in lamellipodia during cell migration. Post-translationally, phosphorylation of the C-terminal region by MAPK1/MAPK3 reduces its association with F-actin and contributes to actin filament reorganization and enhanced cell motility. Ubiquitinated by the ECS(RAB40B) complex leading to its degradation. In terms of tissue distribution, expressed throughout the kidney, including renal cortex, medulla, and glomeruli. Expressed in glomeruli, tubular epithelial cells, and extraglomerular vascular endothelial cells (at protein level).

It localises to the cytoplasm. Its subcellular location is the cell junction. The protein resides in the focal adhesion. It is found in the cytoskeleton. The protein localises to the stress fiber. It localises to the cell membrane. Its subcellular location is the cell projection. The protein resides in the ruffle. It is found in the lamellipodium. In terms of biological role, actin-binding protein involved in actin cytoskeleton regulation and dynamics. Increases the number and size of actin stress fibers and inhibits membrane ruffling. Inhibits actin filament depolymerization. Bundles actin filaments, delays filament nucleation and reduces formation of branched filaments. Acts as a negative regulator of primary cilium formation. Plays a role in cholesterol homeostasis. Influences plasma cholesterol levels through regulation of intestinal cholesterol absorption. May act as a scaffold protein by regulating NPC1L1 transportation, an essential protein for cholesterol absorption, to the plasma membrane by recruiting MYO5B to NPC1L1, and thus facilitates cholesterol uptake. The chain is LIM domain and actin-binding protein 1 from Rattus norvegicus (Rat).